The primary structure comprises 79 residues: Reactive oxygen species modulator 1 (79 aa).

Residues 22 to 44 form a helical membrane-spanning segment; it reads GFVMGCAVGMAAGALFGPFSCLR. The segment at 42-60 is sufficient for antibacterial activity; sequence CLRIGMRGRELMGGIGKTM.

The protein belongs to the MGR2 family.

The protein localises to the mitochondrion inner membrane. Its function is as follows. Has antibacterial activity against a variety of bacteria including S.aureus, P.aeruginosa and M.tuberculosis. Acts by inducing bacterial membrane breakage. Functionally, induces production of reactive oxygen species (ROS) which are necessary for cell proliferation. May play a role in inducing oxidative DNA damage and replicative senescence. May play a role in the coordination of mitochondrial morphology and cell proliferation. The polypeptide is Reactive oxygen species modulator 1 (ROMO1) (Sus scrofa (Pig)).